The chain runs to 890 residues: DNA mismatch repair protein MutS (890 aa).

607-614 contributes to the ATP binding site; it reads GPNMSGKS.

This sequence belongs to the DNA mismatch repair MutS family.

Its function is as follows. This protein is involved in the repair of mismatches in DNA. It is possible that it carries out the mismatch recognition step. This protein has a weak ATPase activity. This chain is DNA mismatch repair protein MutS, found in Bacillus thuringiensis (strain Al Hakam).